A 329-amino-acid chain; its full sequence is Phosphate acyltransferase (329 aa).

The protein belongs to the PlsX family. As to quaternary structure, homodimer. Probably interacts with PlsY.

The protein localises to the cytoplasm. It catalyses the reaction a fatty acyl-[ACP] + phosphate = an acyl phosphate + holo-[ACP]. It participates in lipid metabolism; phospholipid metabolism. Catalyzes the reversible formation of acyl-phosphate (acyl-PO(4)) from acyl-[acyl-carrier-protein] (acyl-ACP). This enzyme utilizes acyl-ACP as fatty acyl donor, but not acyl-CoA. The sequence is that of Phosphate acyltransferase from Geobacillus sp. (strain WCH70).